A 300-amino-acid polypeptide reads, in one-letter code: UDP-N-acetylenolpyruvoylglucosamine reductase (300 aa).

An FAD-binding PCMH-type domain is found at 28–190 (KIGGRVKYLV…TRAMMSFKKE (163 aa)). Arginine 169 is an active-site residue. The active-site Proton donor is the serine 219. Glutamate 290 is an active-site residue.

This sequence belongs to the MurB family. FAD is required as a cofactor.

It is found in the cytoplasm. It catalyses the reaction UDP-N-acetyl-alpha-D-muramate + NADP(+) = UDP-N-acetyl-3-O-(1-carboxyvinyl)-alpha-D-glucosamine + NADPH + H(+). It participates in cell wall biogenesis; peptidoglycan biosynthesis. In terms of biological role, cell wall formation. This chain is UDP-N-acetylenolpyruvoylglucosamine reductase, found in Thermotoga sp. (strain RQ2).